Reading from the N-terminus, the 233-residue chain is Type IV secretion system protein PtlE homolog (233 aa).

Residues 42–62 (VAWAALAVTALSLIAIATMLP) form a helical membrane-spanning segment.

The protein belongs to the virB8 family.

It localises to the cell inner membrane. In Bordetella bronchiseptica (strain ATCC BAA-588 / NCTC 13252 / RB50) (Alcaligenes bronchisepticus), this protein is Type IV secretion system protein PtlE homolog (ptlE).